A 190-amino-acid polypeptide reads, in one-letter code: Large ribosomal subunit protein uL5 (190 aa).

The protein belongs to the universal ribosomal protein uL5 family. In terms of assembly, part of the 50S ribosomal subunit; part of the 5S rRNA/L5/L18/L25 subcomplex. Contacts the 5S rRNA and the P site tRNA. Forms a bridge to the 30S subunit in the 70S ribosome.

This is one of the proteins that bind and probably mediate the attachment of the 5S RNA into the large ribosomal subunit, where it forms part of the central protuberance. In the 70S ribosome it contacts protein S13 of the 30S subunit (bridge B1b), connecting the 2 subunits; this bridge is implicated in subunit movement. Contacts the P site tRNA; the 5S rRNA and some of its associated proteins might help stabilize positioning of ribosome-bound tRNAs. This Bifidobacterium adolescentis (strain ATCC 15703 / DSM 20083 / NCTC 11814 / E194a) protein is Large ribosomal subunit protein uL5.